The chain runs to 184 residues: MKNLTDSFVYLGHWPSAGSFGFNTDILATNPINLSVVFGVLIFFGKGVLNDLLDNRKQRILNTIRNSEELRERAIQQLENARARLRKVETEADQFRVNGYSEIEREKLNLINSTYRTLKQLENYKNETILFEQQRTINQVRERVFQQALQGAIGTLNSCLSNELHLSTINANIGMFGTMKEITD.

The chain crosses the membrane as a helical span at residues 27 to 49; that stretch reads LATNPINLSVVFGVLIFFGKGVL.

This sequence belongs to the ATPase B chain family. In terms of assembly, F-type ATPases have 2 components, F(1) - the catalytic core - and F(0) - the membrane proton channel. F(1) has five subunits: alpha(3), beta(3), gamma(1), delta(1), epsilon(1). F(0) has four main subunits: a(1), b(1), b'(1) and c(10-14). The alpha and beta chains form an alternating ring which encloses part of the gamma chain. F(1) is attached to F(0) by a central stalk formed by the gamma and epsilon chains, while a peripheral stalk is formed by the delta, b and b' chains.

It localises to the plastid. The protein localises to the chloroplast thylakoid membrane. In terms of biological role, f(1)F(0) ATP synthase produces ATP from ADP in the presence of a proton or sodium gradient. F-type ATPases consist of two structural domains, F(1) containing the extramembraneous catalytic core and F(0) containing the membrane proton channel, linked together by a central stalk and a peripheral stalk. During catalysis, ATP synthesis in the catalytic domain of F(1) is coupled via a rotary mechanism of the central stalk subunits to proton translocation. Functionally, component of the F(0) channel, it forms part of the peripheral stalk, linking F(1) to F(0). The chain is ATP synthase subunit b, chloroplastic from Draba nemorosa (Woodland whitlowgrass).